The chain runs to 557 residues: Dihydroxy-acid dehydratase (557 aa).

Cys47 lines the [2Fe-2S] cluster pocket. Asp79 is a Mg(2+) binding site. Cys120 is a binding site for [2Fe-2S] cluster. Mg(2+)-binding residues include Asp121 and Lys122. The residue at position 122 (Lys122) is an N6-carboxylysine. Residue Cys192 coordinates [2Fe-2S] cluster. A Mg(2+)-binding site is contributed by Glu444. Ser470 serves as the catalytic Proton acceptor.

This sequence belongs to the IlvD/Edd family. Homodimer. [2Fe-2S] cluster is required as a cofactor. The cofactor is Mg(2+).

The enzyme catalyses (2R)-2,3-dihydroxy-3-methylbutanoate = 3-methyl-2-oxobutanoate + H2O. It carries out the reaction (2R,3R)-2,3-dihydroxy-3-methylpentanoate = (S)-3-methyl-2-oxopentanoate + H2O. It participates in amino-acid biosynthesis; L-isoleucine biosynthesis; L-isoleucine from 2-oxobutanoate: step 3/4. Its pathway is amino-acid biosynthesis; L-valine biosynthesis; L-valine from pyruvate: step 3/4. In terms of biological role, functions in the biosynthesis of branched-chain amino acids. Catalyzes the dehydration of (2R,3R)-2,3-dihydroxy-3-methylpentanoate (2,3-dihydroxy-3-methylvalerate) into 2-oxo-3-methylpentanoate (2-oxo-3-methylvalerate) and of (2R)-2,3-dihydroxy-3-methylbutanoate (2,3-dihydroxyisovalerate) into 2-oxo-3-methylbutanoate (2-oxoisovalerate), the penultimate precursor to L-isoleucine and L-valine, respectively. The protein is Dihydroxy-acid dehydratase of Parasynechococcus marenigrum (strain WH8102).